The sequence spans 122 residues: Large ribosomal subunit protein eL18 (122 aa).

It belongs to the eukaryotic ribosomal protein eL18 family.

The chain is Large ribosomal subunit protein eL18 from Pyrobaculum aerophilum (strain ATCC 51768 / DSM 7523 / JCM 9630 / CIP 104966 / NBRC 100827 / IM2).